We begin with the raw amino-acid sequence, 83 residues long: Small ribosomal subunit protein uS17 (83 aa).

Belongs to the universal ribosomal protein uS17 family. In terms of assembly, part of the 30S ribosomal subunit.

In terms of biological role, one of the primary rRNA binding proteins, it binds specifically to the 5'-end of 16S ribosomal RNA. This Campylobacter concisus (strain 13826) protein is Small ribosomal subunit protein uS17.